Here is a 100-residue protein sequence, read N- to C-terminus: DSELAGPRGARGPHGLSGPHGLSGLXGPXGYTGPIGMXGLTGLRREESEKVWLESKDGQELELVSSGSAQEELELVSSGSAQVSFASYLGASQPLPSELW.

The tract at residues 1 to 40 (DSELAGPRGARGPHGLSGPHGLSGLXGPXGYTGPIGMXGL) is disordered. Positions 13-29 (PHGLSGPHGLSGLXGPX) are enriched in low complexity.

Detected at high levels in the urine of pregnant females (at protein level) and at far lower levels in the urine of nonpregnant females.

This is Pregnancy-associated protein bPAP from Bos taurus (Bovine).